The primary structure comprises 750 residues: K(+)-insensitive pyrophosphate-energized proton pump (750 aa).

A run of 5 helical transmembrane segments spans residues 1-21, 51-71, 78-98, 133-153, and 161-181; these read MYGL…YQGI, FIII…GGLN, VVFI…VAWF, IGML…LFIP, and FIGF…AGGI. K184 is a binding site for substrate. 3 residues coordinate Mg(2+): D187, D191, and D216. 6 consecutive transmembrane segments (helical) span residues 227–247, 257–277, 301–321, 327–347, 391–411, and 420–440; these read DGFE…LLAI, LVWI…SYWV, LVWL…YMLI, GTMW…GALI, WMGL…TLGL, and VFAF…TIAV. Mg(2+) is bound at residue D448. A run of 4 helical transmembrane segments spans residues 503–523, 538–558, 607–627, and 629–649; these read VLIG…IMIL, ILWP…YWFT, GMIN…CLES, and LFIG…IFMA. Positions 656, 681, and 685 each coordinate Ca(2+). Position 688 (K688) interacts with substrate. Helical transmembrane passes span 694–714 and 716–736; these read ALNP…ELAI and LPTT…LVFV.

Belongs to the H(+)-translocating pyrophosphatase (TC 3.A.10) family. K(+)-insensitive subfamily. Homodimer. The cofactor is Mg(2+).

The protein resides in the cell inner membrane. The enzyme catalyses diphosphate + H2O + H(+)(in) = 2 phosphate + 2 H(+)(out). In terms of biological role, proton pump that utilizes the energy of pyrophosphate hydrolysis as the driving force for proton movement across the membrane. Generates a proton motive force. This is K(+)-insensitive pyrophosphate-energized proton pump from Chlorobaculum tepidum (strain ATCC 49652 / DSM 12025 / NBRC 103806 / TLS) (Chlorobium tepidum).